The following is a 200-amino-acid chain: Small ribosomal subunit protein uS4 (200 aa).

A disordered region spans residues 20 to 41 (TGTGKELDKRPYAPGQHGPNQR). Residues 92–152 (SRLDNLVYRL…EKSKNLDVVK (61 aa)) form the S4 RNA-binding domain.

The protein belongs to the universal ribosomal protein uS4 family. As to quaternary structure, part of the 30S ribosomal subunit. Contacts protein S5. The interaction surface between S4 and S5 is involved in control of translational fidelity.

Functionally, one of the primary rRNA binding proteins, it binds directly to 16S rRNA where it nucleates assembly of the body of the 30S subunit. In terms of biological role, with S5 and S12 plays an important role in translational accuracy. This chain is Small ribosomal subunit protein uS4, found in Oceanobacillus iheyensis (strain DSM 14371 / CIP 107618 / JCM 11309 / KCTC 3954 / HTE831).